The primary structure comprises 451 residues: KNR4/SMI1 homolog 1 (451 aa).

A compositionally biased stretch (polar residues) spans 410-422 (ENQIAGGSDNAKN). Residues 410-451 (ENQIAGGSDNAKNQVKLGETSDTKQDDTSKIASTVSTSDEDE) are disordered. Over residues 428 to 438 (ETSDTKQDDTS) the composition is skewed to basic and acidic residues. Over residues 439-451 (KIASTVSTSDEDE) the composition is skewed to polar residues.

The protein belongs to the KNR4/SMI1 family.

In Debaryomyces hansenii (strain ATCC 36239 / CBS 767 / BCRC 21394 / JCM 1990 / NBRC 0083 / IGC 2968) (Yeast), this protein is KNR4/SMI1 homolog 1.